Reading from the N-terminus, the 362-residue chain is Phosphoserine aminotransferase (362 aa).

Arginine 41 contributes to the L-glutamate binding site. Pyridoxal 5'-phosphate is bound by residues 75 to 76, phenylalanine 101, threonine 152, aspartate 173, and glutamine 196; that span reads GS. The residue at position 197 (lysine 197) is an N6-(pyridoxal phosphate)lysine. 239-240 is a pyridoxal 5'-phosphate binding site; it reads NT.

It belongs to the class-V pyridoxal-phosphate-dependent aminotransferase family. SerC subfamily. As to quaternary structure, homodimer. Pyridoxal 5'-phosphate is required as a cofactor.

It localises to the cytoplasm. The enzyme catalyses O-phospho-L-serine + 2-oxoglutarate = 3-phosphooxypyruvate + L-glutamate. The catalysed reaction is 4-(phosphooxy)-L-threonine + 2-oxoglutarate = (R)-3-hydroxy-2-oxo-4-phosphooxybutanoate + L-glutamate. Its pathway is amino-acid biosynthesis; L-serine biosynthesis; L-serine from 3-phospho-D-glycerate: step 2/3. Its function is as follows. Catalyzes the reversible conversion of 3-phosphohydroxypyruvate to phosphoserine and of 3-hydroxy-2-oxo-4-phosphonooxybutanoate to phosphohydroxythreonine. This Leuconostoc mesenteroides subsp. mesenteroides (strain ATCC 8293 / DSM 20343 / BCRC 11652 / CCM 1803 / JCM 6124 / NCDO 523 / NBRC 100496 / NCIMB 8023 / NCTC 12954 / NRRL B-1118 / 37Y) protein is Phosphoserine aminotransferase.